The primary structure comprises 803 residues: Elongation factor G, mitochondrial (803 aa).

The N-terminal 24 residues, 1–24 (MVRPAQVRAFSGLARSATSTRLIP), are a transit peptide targeting the mitochondrion. The tr-type G domain maps to 102–388 (SKVRNIGIAA…GVCDYLPNPS (287 aa)). GTP contacts are provided by residues 111–118 (AHIDSGKT), 186–190 (DTPGH), and 240–243 (NKMD).

This sequence belongs to the TRAFAC class translation factor GTPase superfamily. Classic translation factor GTPase family. EF-G/EF-2 subfamily.

It localises to the mitochondrion. Its pathway is protein biosynthesis; polypeptide chain elongation. Mitochondrial GTPase that catalyzes the GTP-dependent ribosomal translocation step during translation elongation. During this step, the ribosome changes from the pre-translocational (PRE) to the post-translocational (POST) state as the newly formed A-site-bound peptidyl-tRNA and P-site-bound deacylated tRNA move to the P and E sites, respectively. Catalyzes the coordinated movement of the two tRNA molecules, the mRNA and conformational changes in the ribosome. In Talaromyces marneffei (strain ATCC 18224 / CBS 334.59 / QM 7333) (Penicillium marneffei), this protein is Elongation factor G, mitochondrial (mef1).